A 337-amino-acid polypeptide reads, in one-letter code: Probable dual-specificity RNA methyltransferase RlmN (337 aa).

Catalysis depends on Glu88, which acts as the Proton acceptor. Residues 94–322 form the Radical SAM core domain; the sequence is SSDRLTVCVS…ASIRRSRGLD (229 aa). Cys101 and Cys327 are oxidised to a cystine. [4Fe-4S] cluster-binding residues include Cys108, Cys112, and Cys115. Residues 155-156, Ser185, 208-210, and Asn284 each bind S-adenosyl-L-methionine; these read GE and SLH. Cys327 functions as the S-methylcysteine intermediate in the catalytic mechanism.

Belongs to the radical SAM superfamily. RlmN family. [4Fe-4S] cluster serves as cofactor.

Its subcellular location is the cytoplasm. The enzyme catalyses adenosine(2503) in 23S rRNA + 2 reduced [2Fe-2S]-[ferredoxin] + 2 S-adenosyl-L-methionine = 2-methyladenosine(2503) in 23S rRNA + 5'-deoxyadenosine + L-methionine + 2 oxidized [2Fe-2S]-[ferredoxin] + S-adenosyl-L-homocysteine. It carries out the reaction adenosine(37) in tRNA + 2 reduced [2Fe-2S]-[ferredoxin] + 2 S-adenosyl-L-methionine = 2-methyladenosine(37) in tRNA + 5'-deoxyadenosine + L-methionine + 2 oxidized [2Fe-2S]-[ferredoxin] + S-adenosyl-L-homocysteine. Its function is as follows. Specifically methylates position 2 of adenine 2503 in 23S rRNA and position 2 of adenine 37 in tRNAs. The sequence is that of Probable dual-specificity RNA methyltransferase RlmN from Thermosynechococcus vestitus (strain NIES-2133 / IAM M-273 / BP-1).